We begin with the raw amino-acid sequence, 194 residues long: Calcium channel flower (194 aa).

Helical transmembrane passes span 35–55, 66–88, and 113–133; these read LGIVAAFFAILFGLWNVFSII, IIQMVAGFVVMLLEAPCCFVCFE, and AIPPIILCFGLASLFGSGLIF.

The protein belongs to the calcium channel flower family. Homomultimer. Associates with the dally/ magu complex.

It is found in the cytoplasmic vesicle. The protein localises to the secretory vesicle. Its subcellular location is the synaptic vesicle membrane. It localises to the presynaptic cell membrane. The protein resides in the endosome. Its activity is regulated as follows. Channel activity is inhibited by La(3+), which reduces Ca(2+) influx and thus inhibits it's function in promoting activity-dependent bulk endocytosis (ADBE) in response to high stimuli. Functionally, transmembrane protein which mediates synaptic endocytosis, fitness-based cell culling, neuronal culling, morphogen gradient scaling, and calcium transport. Regulates synaptic endocytosis and hence couples exo- with endocytosis. Controls two major modes of synaptic vesicle (SV) endocytosis in the synaptic boutons of neuromuscular junctions (NMJs); Ca(2+) channel-independent Clathrin-mediated endocytosis (CME) in response to mild stimulation, and Ca(2+) channel-dependent activity-dependent bulk endocytosis (ADBE) in response to strong stimulation. Functions in ADBE and subsequent SV reformation from bulk endosomes by initiating Ca(2+) channel-dependent phosphatidylinositol 4,5-bisphosphate (PtdIns(4,5)P2) compartmentalization in synaptic boutons. There it acts at the periactive zone to provide the low Ca(2+) levels required to initiate Calcineurin activation and upregulate PtdIns(4,5)P2. Conversely PtdIns(4,5)P2 enhances fwe Ca(2+) channel-activity, establishing a positive feedback loop that induces PtdIns(4,5)P2 microdomain at the periactive zone. These microdomains trigger bulk membrane invagination (i.e. ADBE) by triggering actin polymerization while also promoting localization of fwe to bulk endosomes, thereby removing the ADBE trigger to reduce endocytosis and prevent excess membrane uptake. PtdIns(4,5)P2 then promotes SV reformation from the bulk endosomes, to coordinate ADBE and subsequent SV reformation. Different combinations of the flower isoforms at the cell membrane are also required for the identification and elimination of suboptimal or supernumerary cells during development, regeneration, and adulthood. Required for the recognition and elimination of unfit cells in the developing wing during cell competition. In the developing pupal retina, mediates the elimination of unwanted postmitotic neurons, including supernumerary photoreceptor neurons that form at the periphery of the retina and are contained within incomplete ommatidia units. Also required for efficient elimination and replacement of old neurons by newly generated neurons during regeneration in the adult brain following mechanical injury. Downstream of the flower fitness fingerprints, cells identified as unwanted or unfit are eliminated via apoptosis through the expression of ahuizotl (azot). However, the cells marked for elimination by the flower isoforms only undergo apoptosis if additional thresholds are met; (1) their neighboring fit/healthy cells express different levels of the fwe isoforms, and (2) the levels of the protective signal SPARC expressed by the loser or unwanted cells are unable to inhibit caspase activation. These additional thresholds for flower-mediated apoptosis, allows useful cells to recover from transient and limited stress before they are unnecessarily eliminated. Functions with dally and magu in a mechanism of scaling, which utilises apoptosis to ensure that the dpp morphogen gradient, which mediates organ growth, remains proportional to the size of the growing wing. In this mechanism, fwe represses dally- and Magu-dependent activity in expanding the gradient, and dally/Magu inhibits fwe-dependent apoptosis to keep cell death rate low. When the levels of these different proteins are optimally regulated the gradient correctly scales with organ growth but when this fails, fwe-mediated apoptosis is activated to trim the developing tissue to match the correct size of the gradient. This is Calcium channel flower from Drosophila yakuba (Fruit fly).